We begin with the raw amino-acid sequence, 186 residues long: MELNEVYQYTKEHMEKTIDAMKRDFATLRTGKVSTAIVEPIRVDYYGTPTPLSQVGSVIASDATTLVISPWEKNLLKGIEKAIQEANIGVNPNNDGDVIKLFFPPMTSEQRKEIAKDAKALGEKAKVAVRNIRKESNDKIKKLEKDKLITEDQSKKAHDEVQKYTDDYVKKIDDMVKSKEEEILKV.

It belongs to the RRF family.

The protein resides in the cytoplasm. In terms of biological role, responsible for the release of ribosomes from messenger RNA at the termination of protein biosynthesis. May increase the efficiency of translation by recycling ribosomes from one round of translation to another. The polypeptide is Ribosome-recycling factor (Wolinella succinogenes (strain ATCC 29543 / DSM 1740 / CCUG 13145 / JCM 31913 / LMG 7466 / NCTC 11488 / FDC 602W) (Vibrio succinogenes)).